A 100-amino-acid chain; its full sequence is Co-chaperonin GroES (100 aa).

The protein belongs to the GroES chaperonin family. As to quaternary structure, heptamer of 7 subunits arranged in a ring. Interacts with the chaperonin GroEL.

It localises to the cytoplasm. In terms of biological role, together with the chaperonin GroEL, plays an essential role in assisting protein folding. The GroEL-GroES system forms a nano-cage that allows encapsulation of the non-native substrate proteins and provides a physical environment optimized to promote and accelerate protein folding. GroES binds to the apical surface of the GroEL ring, thereby capping the opening of the GroEL channel. In Mycobacterium marinum (strain ATCC BAA-535 / M), this protein is Co-chaperonin GroES.